The primary structure comprises 166 residues: Cyclic pyranopterin monophosphate synthase (166 aa).

Residues 83–85 (LCH) and 121–122 (ME) each bind substrate. The active site involves Asp136.

The protein belongs to the MoaC family. As to quaternary structure, homohexamer; trimer of dimers.

It catalyses the reaction (8S)-3',8-cyclo-7,8-dihydroguanosine 5'-triphosphate = cyclic pyranopterin phosphate + diphosphate. It participates in cofactor biosynthesis; molybdopterin biosynthesis. Its function is as follows. Catalyzes the conversion of (8S)-3',8-cyclo-7,8-dihydroguanosine 5'-triphosphate to cyclic pyranopterin monophosphate (cPMP). This Syntrophobacter fumaroxidans (strain DSM 10017 / MPOB) protein is Cyclic pyranopterin monophosphate synthase.